Reading from the N-terminus, the 191-residue chain is Oleosin 20.3 kDa (191 aa).

A2 is modified (N-acetylalanine). The segment at 2–54 (ANVDRDRRVHVDRTDKRVHQPNYEDDVGFGGYGGYGAGSDYKSRGPSTNQILA) is polar. The next 2 helical transmembrane spans lie at 52–72 (ILAL…AGLT) and 99–119 (LTIG…LTGL). Residues 55-128 (LIAGVPIGGT…LSSVSWVLNY (74 aa)) form a hydrophobic region.

It belongs to the oleosin family.

The protein resides in the lipid droplet. It is found in the membrane. Functionally, may have a structural role to stabilize the lipid body during desiccation of the seed by preventing coalescence of the oil. Probably interacts with both lipid and phospholipid moieties of lipid bodies. May also provide recognition signals for specific lipase anchorage in lipolysis during seedling growth. The chain is Oleosin 20.3 kDa (OL2) from Arabidopsis thaliana (Mouse-ear cress).